A 141-amino-acid chain; its full sequence is Nucleoside diphosphate kinase (141 aa).

ATP contacts are provided by K11, F59, R87, T93, R104, and N114. H117 (pros-phosphohistidine intermediate) is an active-site residue.

This sequence belongs to the NDK family. As to quaternary structure, homotetramer. Mg(2+) serves as cofactor.

The protein localises to the cytoplasm. The enzyme catalyses a 2'-deoxyribonucleoside 5'-diphosphate + ATP = a 2'-deoxyribonucleoside 5'-triphosphate + ADP. It catalyses the reaction a ribonucleoside 5'-diphosphate + ATP = a ribonucleoside 5'-triphosphate + ADP. Its function is as follows. Major role in the synthesis of nucleoside triphosphates other than ATP. The ATP gamma phosphate is transferred to the NDP beta phosphate via a ping-pong mechanism, using a phosphorylated active-site intermediate. This Ralstonia pickettii (strain 12J) protein is Nucleoside diphosphate kinase.